The primary structure comprises 743 residues: Phosphoribosylformylglycinamidine synthase subunit PurL (743 aa).

His50 is an active-site residue. ATP-binding residues include Tyr53 and Lys92. Glu94 provides a ligand contact to Mg(2+). Substrate is bound by residues 95 to 98 and Arg117; that span reads SHNH. His96 serves as the catalytic Proton acceptor. Asp118 contributes to the Mg(2+) binding site. Residue Gln241 coordinates substrate. Asp269 provides a ligand contact to Mg(2+). 313–315 is a substrate binding site; that stretch reads ESQ. Residues Asp494 and Gly531 each contribute to the ATP site. Asn532 contributes to the Mg(2+) binding site. Substrate is bound at residue Ser534.

The protein belongs to the FGAMS family. As to quaternary structure, monomer. Part of the FGAM synthase complex composed of 1 PurL, 1 PurQ and 2 PurS subunits.

Its subcellular location is the cytoplasm. It catalyses the reaction N(2)-formyl-N(1)-(5-phospho-beta-D-ribosyl)glycinamide + L-glutamine + ATP + H2O = 2-formamido-N(1)-(5-O-phospho-beta-D-ribosyl)acetamidine + L-glutamate + ADP + phosphate + H(+). It functions in the pathway purine metabolism; IMP biosynthesis via de novo pathway; 5-amino-1-(5-phospho-D-ribosyl)imidazole from N(2)-formyl-N(1)-(5-phospho-D-ribosyl)glycinamide: step 1/2. In terms of biological role, part of the phosphoribosylformylglycinamidine synthase complex involved in the purines biosynthetic pathway. Catalyzes the ATP-dependent conversion of formylglycinamide ribonucleotide (FGAR) and glutamine to yield formylglycinamidine ribonucleotide (FGAM) and glutamate. The FGAM synthase complex is composed of three subunits. PurQ produces an ammonia molecule by converting glutamine to glutamate. PurL transfers the ammonia molecule to FGAR to form FGAM in an ATP-dependent manner. PurS interacts with PurQ and PurL and is thought to assist in the transfer of the ammonia molecule from PurQ to PurL. In Mesorhizobium japonicum (strain LMG 29417 / CECT 9101 / MAFF 303099) (Mesorhizobium loti (strain MAFF 303099)), this protein is Phosphoribosylformylglycinamidine synthase subunit PurL.